The following is a 231-amino-acid chain: Endonuclease NucS (231 aa).

The protein belongs to the NucS endonuclease family.

Its subcellular location is the cytoplasm. In terms of biological role, cleaves both 3' and 5' ssDNA extremities of branched DNA structures. The protein is Endonuclease NucS of Beutenbergia cavernae (strain ATCC BAA-8 / DSM 12333 / CCUG 43141 / JCM 11478 / NBRC 16432 / NCIMB 13614 / HKI 0122).